Here is a 172-residue protein sequence, read N- to C-terminus: uncharacterized protein (172 aa).

The Lumenal segment spans residues 1-101 (MEHVSKRSIG…RYDINTRPLV (101 aa)). The chain crosses the membrane as a helical span at residues 102–122 (VVLAISIVFFGCLLVLKDIII). Residues 123–145 (QSSENILSVSKWKIIGASFMGTP) lie on the Cytoplasmic side of the membrane. Residues 146 to 164 (YTGLLTGLVGPLLSPFSAV) form a helical membrane-spanning segment. Residues 165 to 172 (SSWLSFIF) lie on the Lumenal side of the membrane.

It localises to the endoplasmic reticulum membrane. This is an uncharacterized protein from Saccharomyces cerevisiae (strain ATCC 204508 / S288c) (Baker's yeast).